Consider the following 436-residue polypeptide: Fasciclin-like arabinogalactan protein 15 (436 aa).

Residues 1–20 (MDDLSKLLFFLLLTISITTA) form the signal peptide. 2 FAS1 domains span residues 31–165 (NSNS…ERLL) and 249–392 (VKDF…DGVL). 2 N-linked (GlcNAc...) asparagine glycosylation sites follow: asparagine 68 and asparagine 271.

The protein belongs to the fasciclin-like AGP family.

The protein localises to the secreted. Functionally, may be a cell surface adhesion protein. This chain is Fasciclin-like arabinogalactan protein 15 (FLA15), found in Arabidopsis thaliana (Mouse-ear cress).